The following is a 348-amino-acid chain: Dihydroorotase (348 aa).

Zn(2+)-binding residues include histidine 14 and histidine 16. Substrate-binding positions include 16 to 18 (HLR) and asparagine 42. Residues lysine 100, histidine 137, and histidine 175 each contribute to the Zn(2+) site. Lysine 100 carries the N6-carboxylysine modification. Histidine 137 provides a ligand contact to substrate. Leucine 220 lines the substrate pocket. Aspartate 248 contacts Zn(2+). Residue aspartate 248 is part of the active site. Substrate contacts are provided by histidine 252 and alanine 264.

Belongs to the metallo-dependent hydrolases superfamily. DHOase family. Class II DHOase subfamily. In terms of assembly, homodimer. The cofactor is Zn(2+).

It catalyses the reaction (S)-dihydroorotate + H2O = N-carbamoyl-L-aspartate + H(+). The protein operates within pyrimidine metabolism; UMP biosynthesis via de novo pathway; (S)-dihydroorotate from bicarbonate: step 3/3. In terms of biological role, catalyzes the reversible cyclization of carbamoyl aspartate to dihydroorotate. The protein is Dihydroorotase of Pseudomonas aeruginosa (strain LESB58).